We begin with the raw amino-acid sequence, 436 residues long: Tol-Pal system protein TolB (436 aa).

The N-terminal stretch at 1–28 (MEMLRRNFFRLLMVLVAGCGLIASPAKA) is a signal peptide.

Belongs to the TolB family. In terms of assembly, the Tol-Pal system is composed of five core proteins: the inner membrane proteins TolA, TolQ and TolR, the periplasmic protein TolB and the outer membrane protein Pal. They form a network linking the inner and outer membranes and the peptidoglycan layer.

The protein resides in the periplasm. Part of the Tol-Pal system, which plays a role in outer membrane invagination during cell division and is important for maintaining outer membrane integrity. The chain is Tol-Pal system protein TolB from Sinorhizobium medicae (strain WSM419) (Ensifer medicae).